A 494-amino-acid polypeptide reads, in one-letter code: Glutamate--tRNA ligase (494 aa).

The 'HIGH' region signature appears at P10–T20. 4 residues coordinate Zn(2+): C107, C109, C134, and H136. Residues K251–R255 carry the 'KMSKS' region motif. K254 is an ATP binding site.

Belongs to the class-I aminoacyl-tRNA synthetase family. Glutamate--tRNA ligase type 1 subfamily. Monomer. Zn(2+) is required as a cofactor.

The protein resides in the cytoplasm. The catalysed reaction is tRNA(Glu) + L-glutamate + ATP = L-glutamyl-tRNA(Glu) + AMP + diphosphate. Functionally, catalyzes the attachment of glutamate to tRNA(Glu) in a two-step reaction: glutamate is first activated by ATP to form Glu-AMP and then transferred to the acceptor end of tRNA(Glu). This is Glutamate--tRNA ligase from Pseudomonas aeruginosa (strain UCBPP-PA14).